Consider the following 712-residue polypeptide: Ribosomal RNA large subunit methyltransferase K/L (712 aa).

Residues 43-154 (LAYRITLWTR…NGQLTISMNF (112 aa)) form the THUMP domain.

This sequence belongs to the methyltransferase superfamily. RlmKL family.

Its subcellular location is the cytoplasm. The enzyme catalyses guanosine(2445) in 23S rRNA + S-adenosyl-L-methionine = N(2)-methylguanosine(2445) in 23S rRNA + S-adenosyl-L-homocysteine + H(+). It carries out the reaction guanosine(2069) in 23S rRNA + S-adenosyl-L-methionine = N(2)-methylguanosine(2069) in 23S rRNA + S-adenosyl-L-homocysteine + H(+). Specifically methylates the guanine in position 2445 (m2G2445) and the guanine in position 2069 (m7G2069) of 23S rRNA. This is Ribosomal RNA large subunit methyltransferase K/L from Shewanella frigidimarina (strain NCIMB 400).